The primary structure comprises 428 residues: Immunoglobulin superfamily member 11 (428 aa).

Positions M1 to S22 are cleaved as a signal peptide. An Ig-like V-type domain is found at L23–T136. At L23 to S239 the chain is on the extracellular side. Intrachain disulfides connect C44/C120 and C165/C215. N102 is a glycosylation site (N-linked (GlcNAc...) asparagine). Residues P144 to S234 form the Ig-like C2-type domain. A helical membrane pass occupies residues V240–L260. At T261–V428 the chain is on the cytoplasmic side. R375 carries the post-translational modification Omega-N-methylarginine.

In terms of processing, N-glycosylated.

Its subcellular location is the cell membrane. In terms of biological role, functions as a cell adhesion molecule through homophilic interaction. Stimulates cell growth. The sequence is that of Immunoglobulin superfamily member 11 (Igsf11) from Rattus norvegicus (Rat).